The chain runs to 381 residues: Carboxylesterase 5A (381 aa).

Ser-108 serves as the catalytic Acyl-ester intermediate. Residues Cys-162 and Cys-173 are joined by a disulfide bond. Residue Asn-163 is glycosylated (N-linked (GlcNAc...) asparagine). The active-site Charge relay system is the Glu-227. N-linked (GlcNAc...) asparagine glycosylation occurs at Asn-245. His-336 acts as the Charge relay system in catalysis.

This sequence belongs to the type-B carboxylesterase/lipase family. Component of a epididymal complex at least composed of soluble form of prion protein PRNP, CLU, BPI, CES5A, MANBA and GLB1. In terms of processing, N-glycosylated. As to expression, detected in corpus and cauda epididymal fluid. Present in seminal fluid but not found to be associated with sperm (at protein level). Not expressed in other tissues.

It localises to the secreted. The catalysed reaction is a carboxylic ester + H2O = an alcohol + a carboxylate + H(+). Involved in the detoxification of xenobiotics and in the activation of ester and amide prodrugs. This is Carboxylesterase 5A (CES5A) from Ovis aries (Sheep).